The sequence spans 964 residues: Protein translocase subunit SecA (964 aa).

ATP contacts are provided by residues glutamine 86, glycine 104–threonine 108, and aspartate 494. The tract at residues glutamate 846–alanine 964 is disordered. Residues alanine 871–threonine 882 are compositionally biased toward acidic residues. A compositionally biased stretch (low complexity) spans alanine 887–serine 900. Zn(2+) contacts are provided by cysteine 947, cysteine 949, cysteine 958, and histidine 959.

Belongs to the SecA family. In terms of assembly, monomer and homodimer. Part of the essential Sec protein translocation apparatus which comprises SecA, SecYEG and auxiliary proteins SecDF. Other proteins may also be involved. Zn(2+) serves as cofactor.

Its subcellular location is the cell membrane. It is found in the cytoplasm. It catalyses the reaction ATP + H2O + cellular proteinSide 1 = ADP + phosphate + cellular proteinSide 2.. Functionally, part of the Sec protein translocase complex. Interacts with the SecYEG preprotein conducting channel. Has a central role in coupling the hydrolysis of ATP to the transfer of proteins into and across the cell membrane, serving as an ATP-driven molecular motor driving the stepwise translocation of polypeptide chains across the membrane. This is Protein translocase subunit SecA from Bifidobacterium longum subsp. infantis (strain ATCC 15697 / DSM 20088 / JCM 1222 / NCTC 11817 / S12).